A 148-amino-acid chain; its full sequence is Endothelial differentiation-related factor 1 homolog (148 aa).

Positions 1–26 (MAESDWDTVTVLRKKGPSAAQAKSKQ) are disordered. In terms of domain architecture, HTH cro/C1-type spans 81 to 135 (IQQGRQSKGMTQKDLATKINEKPQVIADYESGRAIPNNQVMGKIERAIGLKLRGK). The segment at residues 92–111 (QKDLATKINEKPQVIADYES) is a DNA-binding region (H-T-H motif).

It is found in the nucleus. Functionally, probable transcriptional coactivator. The chain is Endothelial differentiation-related factor 1 homolog (EDF1) from Gallus gallus (Chicken).